The sequence spans 79 residues: Sec-independent protein translocase protein TatA (79 aa).

Residues 1 to 21 (MGSLSIWHWIVVIAVVLLLFG) traverse the membrane as a helical segment. Basic and acidic residues predominate over residues 43–60 (LQDDEKTAEKPDPVKSID). The segment at 43 to 79 (LQDDEKTAEKPDPVKSIDHNAPTAAAPTRTDVGSKAV) is disordered.

Belongs to the TatA/E family. The Tat system comprises two distinct complexes: a TatABC complex, containing multiple copies of TatA, TatB and TatC subunits, and a separate TatA complex, containing only TatA subunits. Substrates initially bind to the TatABC complex, which probably triggers association of the separate TatA complex to form the active translocon.

Its subcellular location is the cell inner membrane. Its function is as follows. Part of the twin-arginine translocation (Tat) system that transports large folded proteins containing a characteristic twin-arginine motif in their signal peptide across membranes. TatA could form the protein-conducting channel of the Tat system. The sequence is that of Sec-independent protein translocase protein TatA from Rhodopseudomonas palustris (strain BisB5).